The following is a 263-amino-acid chain: HTH-type transcriptional repressor NanR (263 aa).

Positions 1 to 24 are disordered; it reads MSPMNAFDSQTEDSSPAIGRNLRS. Positions 30–98 constitute an HTH gntR-type domain; the sequence is KKLSEMVEEE…NGERARVSRP (69 aa). Residues 58 to 77 constitute a DNA-binding region (H-T-H motif); that stretch reads ERELMAFFNVGRPSVREALA.

Belongs to the NanR family.

Transcriptional repressor that controls expression of the genes required for the catabolism of sialic acids. The protein is HTH-type transcriptional repressor NanR of Escherichia coli O127:H6 (strain E2348/69 / EPEC).